Reading from the N-terminus, the 721-residue chain is BBSome complex member bbs-7 (721 aa).

In terms of assembly, part of BBSome complex, that contains at least bbs-1, bbs-2, bbs-4, bbs-5, osm-12, bbs-8/ttc-8 and bbs-9. Interacts with bbs-1. As to expression, expressed in ciliated cells including amphid and both inner and outer labial neurons of the head and in both phasmid neurons PHA and PHB in the tail at larval stages L1 and L2.

The protein resides in the cell projection. It localises to the cilium. It is found in the cytoplasm. Its subcellular location is the cytoskeleton. The protein localises to the cilium basal body. The protein resides in the cilium axoneme. Its function is as follows. Component of the BBSome complex. The BBSome complex is thought to function as a coat complex required for sorting of specific membrane proteins to the primary cilia. The BBSome complex is required for ciliogenesis but is dispensable for centriolar satellite function. Required for proper BBSome complex assembly and its ciliary localization. Required for cilia biogenesis and both the assembly and movement of intraflagellar transport proteins along the ciliary axoneme. Plays a role in the removal of degraded mechanosensory receptors within the cilia. Plays a role in guanylyl cyclase localization in the ring-like structures at the base of the finger compartment in AFD sensory neurons. In ciliated sensory neurons, required for the sensation of nitric oxide and avoidance of NO-producing organisms like P.aeruginosa. This is BBSome complex member bbs-7 from Caenorhabditis elegans.